The primary structure comprises 932 residues: Isoleucine--tRNA ligase (932 aa).

A 'HIGH' region motif is present at residues 58 to 68 (PYANGNLHLGH). Position 567 (E567) interacts with L-isoleucyl-5'-AMP. A 'KMSKS' region motif is present at residues 608–612 (KMSKS). Residue K611 participates in ATP binding. C895, C898, C915, and C918 together coordinate Zn(2+).

This sequence belongs to the class-I aminoacyl-tRNA synthetase family. IleS type 1 subfamily. As to quaternary structure, monomer. Zn(2+) serves as cofactor.

It is found in the cytoplasm. The enzyme catalyses tRNA(Ile) + L-isoleucine + ATP = L-isoleucyl-tRNA(Ile) + AMP + diphosphate. Catalyzes the attachment of isoleucine to tRNA(Ile). As IleRS can inadvertently accommodate and process structurally similar amino acids such as valine, to avoid such errors it has two additional distinct tRNA(Ile)-dependent editing activities. One activity is designated as 'pretransfer' editing and involves the hydrolysis of activated Val-AMP. The other activity is designated 'posttransfer' editing and involves deacylation of mischarged Val-tRNA(Ile). This is Isoleucine--tRNA ligase from Azoarcus sp. (strain BH72).